The sequence spans 501 residues: MAYSSRSCDQCSHERRSGFMKWLCAFLKGTKDGEANRRRPRVTAGEETTLWEEPVRPKKEEPPRHNNEEMDHALALALADDAKNTKERNHDKGENDEELARAIQDSLNMNPYQPYNPCAPSQTQARSRGYRVCGGCKHEIGHGHYLSCLGMYWHPQCFRCSSCRHPIREMEFTLLGTDPYHKLCYKELHHPKCDVCLQFIPTNRTGLIEYRAHPFWGQKYCPLHEHDRTPRCCSCEKMEPRNTKYMSLGDGRSLCMECLDSAIMDTGECQPLYHSIRDYYEGMNMKLDQQIPMLLVERQALNEAMEGESKGPHHMPETRGLCLSEEQTVTSILRRPRIGANRLLDMKTQPQKLTRRCEVTAILVLFGLPRLLTGSILAHELMHGWLRLKGYRNLKAEIEEGICQVMSYLWLESEILPSTSRYGQASTSYASSSSSSCRPPPSKKGGISHTEKKLGEFFLHQIANDTSSAYGDGFRAAYAAVNKYGLRQSLNHIRLTGGFPV.

The interval 33 to 67 (GEANRRRPRVTAGEETTLWEEPVRPKKEEPPRHNN) is disordered. Basic and acidic residues predominate over residues 53 to 67 (EPVRPKKEEPPRHNN). UIM domains follow at residues 65-84 (HNNEEMDHALALALADDAKN) and 94-113 (ENDEELARAIQDSLNMNPYQ). One can recognise an LIM zinc-binding domain in the interval 131–191 (RVCGGCKHEI…KLCYKELHHP (61 aa)). The segment at 429–448 (YASSSSSSCRPPPSKKGGIS) is disordered.

Interacts (via N-terminus) with GW6A (via C-terminus).

In terms of biological role, ubiquitin receptor that functions as a positive regulator of grain size and weight. Functions in the same genetic pathway as GW6A to regulate grain size. Modulates grain size in a similar manner to GW6A, by altering cell proliferation in spikelet hulls. Interacts with and enhances the ubiquitination of GW6A. This stabilizes GW6A, delays protein degradation by the 26S proteasome and enhances GW6A histone acetyltransferase activity. In Oryza sativa subsp. japonica (Rice), this protein is LIM domain-containing protein HDR3.